The primary structure comprises 347 residues: Fc receptor-like A (347 aa).

A signal peptide spans 1–27 (MKLSCMLIEWALYVCPAVLLATQMSLA). Ig-like C2-type domains are found at residues 77–166 (PFHL…ETAS) and 179–257 (PVLK…RQIS). 2 disulfides stabilise this stretch: Cys-106/Cys-150 and Cys-199/Cys-247. Residues 272-296 (KPATPETPPPAKAPGPLPLLPTPSD) are disordered. Pro residues predominate over residues 276 to 292 (PETPPPAKAPGPLPLLP).

In terms of assembly, monomer or homodimer; disulfide-linked.

It localises to the cytoplasm. In terms of biological role, may be implicated in B-cell differentiation and lymphomagenesis. This is Fc receptor-like A (Fcrla) from Rattus norvegicus (Rat).